A 701-amino-acid polypeptide reads, in one-letter code: Heterodisulfide reductase subunit A-like protein (701 aa).

152–175 lines the FAD pocket; sequence GGGIAGIFAALDIANAGYKVYLVE. A 4Fe-4S ferredoxin-type 1 domain is found at 239-268; it reads KQTWVDWDLCTGCGACTDVCPPKARVPDEF. Residues Cys248, Cys251, Cys254, Cys326, Cys627, Cys630, Cys633, Cys637, Cys660, Cys663, Cys666, and Cys670 each contribute to the [4Fe-4S] cluster site. 2 consecutive 4Fe-4S ferredoxin-type domains span residues 618-647 and 651-680; these read LVSEVDKEKCSGCGICVPLCPYGAITMTKY and MRAEINPALCKGCGVCAAACPSKAIKLHGF.

It belongs to the HdrA family. The heterodisulfide reductase is composed of three subunits; HdlA, HdlB and HdlC. It forms a complex with the F420-non-reducing hydrogenase (Mvh), which provides the reducing equivalents to the heterodisulfide reductase. [4Fe-4S] cluster serves as cofactor. Requires FAD as cofactor.

The protein localises to the cytoplasm. Has oxidoreductase activity. The Hdl and Mvh subunits may together mediate electron transfer from hydrogen to an unidentified electron acceptor on the cytoplasmic side of the membrane. In Archaeoglobus profundus (strain DSM 5631 / JCM 9629 / NBRC 100127 / Av18), this protein is Heterodisulfide reductase subunit A-like protein (hdlA).